Consider the following 147-residue polypeptide: Hemoglobin subunit beta (147 aa).

Positions 3-147 (HWTPEEKQYI…VAHALALGYH (145 aa)) constitute a Globin domain. Histidine 64 and histidine 93 together coordinate heme b.

This sequence belongs to the globin family. In terms of assembly, heterotetramer of two alpha-D chains and two beta chains. As to expression, red blood cells.

In terms of biological role, involved in oxygen transport from the lung to the various peripheral tissues. The sequence is that of Hemoglobin subunit beta (HBB) from Chelonoidis niger (Galapagos giant tortoise).